A 142-amino-acid chain; its full sequence is Large ribosomal subunit protein uL13 (142 aa).

This sequence belongs to the universal ribosomal protein uL13 family. As to quaternary structure, part of the 50S ribosomal subunit.

Its function is as follows. This protein is one of the early assembly proteins of the 50S ribosomal subunit, although it is not seen to bind rRNA by itself. It is important during the early stages of 50S assembly. The chain is Large ribosomal subunit protein uL13 from Vibrio cholerae serotype O1 (strain M66-2).